The sequence spans 860 residues: MEISSAGPVGAQPLLMVPRRPGYGTMGKPIKLLANCFQVEIPKIDVYLYEVDIKPDKCPRRVNREVVDSMVQHFKVTIFGDRRPVYDGKRSLYTANPLPVATTGVDLDVTLPGEGGKDRPFKVSIKFVSRVSWHLLHEVLTGRTLPEPLEPDKPISTNPVHAVDVVLRHLPSMKYTPVGRSFFSAPEGYDHPLGGGREVWFGFHQSVRPAMWKMMLNIDVSATAFYKAQPVIQFMCEVLDIHNIDEQPRPLTDSHRVKFTKEIKGLKVEVTHCGTMRRKYRVCNVTRRPASHQTFPLQLENGQTVERTVAQYFREKYNLQLKYPHLPCLQVGQEQKHTYLPLEVCNIVAGQRCIKKLTDNQTSTMIKATARSAPDRQEEISRLVRSANYDADPFVQEFQFKVRDEMAHVTGRVLPAPMLQYGGRNRTVATPSHGVWDMRGKQFHTGVEIKMWAIACFATQRQCREEILKGFTDQLRKISKDAGMPIQGQPCFCKYAQGADSVGPMFRHLKNTYSGLQLIIVILPGKTPVYAEVKRAGDTLLGMATQCVQVKNVIKTSPQTLSNLCLKINVKLGGINNILVPHQRPSVFQQPVIFLGADVTHPPAGDGKKPSIAAVVGSMDAHPSRYCATVRVQRPRQEIIQDLASMVRELLIQFYKSTRFKPTRIIFYRDGVSEGQFRQVLYYELLAIREACISLEKDYQPGITYIVVQKRHHTRLFCADRTERVGRSGNIPAGTTVDTDITHPYEFDFYLCSHAGIQGTSRPSHYHVLWDDNCFTADELQLLTYQLCHTYVRCTRSVSIPAPAYYAHLVAFRARYHLVDKEHDSAEGSHVSGQSNGRDPQALAKAVQIHQDTLRTMYFA.

In terms of domain architecture, PAZ spans Pro-230 to Ala-349. One can recognise a Piwi domain in the interval Leu-518–Val-819. Positions Tyr-530–Lys-567 are interaction with guide RNA. A divalent metal cation-binding residues include Asp-598, Glu-638, and Asp-670. An interaction with guide RNA region spans residues Gln-758–Tyr-805. His-808 is an a divalent metal cation binding site.

This sequence belongs to the argonaute family. Ago subfamily.

Its subcellular location is the cytoplasm. The protein localises to the P-body. The catalysed reaction is Endonucleolytic cleavage to 5'-phosphomonoester.. Required for RNA-mediated gene silencing (RNAi). Binds to short RNAs such as microRNAs (miRNAs) and represses the translation of mRNAs which are complementary to them. Possesses RNA slicer activity but only on select RNAs bearing 5'- and 3'-flanking sequences to the region of guide-target complementarity. This is Protein argonaute-3 (AGO3) from Gallus gallus (Chicken).